Consider the following 205-residue polypeptide: Methylthioribulose-1-phosphate dehydratase (205 aa).

C75 serves as a coordination point for substrate. Zn(2+) is bound by residues H93 and H95. E116 acts as the Proton donor/acceptor in catalysis. A Zn(2+)-binding site is contributed by H171.

The protein belongs to the aldolase class II family. MtnB subfamily. The cofactor is Zn(2+).

It is found in the cytoplasm. The catalysed reaction is 5-(methylsulfanyl)-D-ribulose 1-phosphate = 5-methylsulfanyl-2,3-dioxopentyl phosphate + H2O. It participates in amino-acid biosynthesis; L-methionine biosynthesis via salvage pathway; L-methionine from S-methyl-5-thio-alpha-D-ribose 1-phosphate: step 2/6. Its function is as follows. Catalyzes the dehydration of methylthioribulose-1-phosphate (MTRu-1-P) into 2,3-diketo-5-methylthiopentyl-1-phosphate (DK-MTP-1-P). This chain is Methylthioribulose-1-phosphate dehydratase, found in Kluyveromyces lactis (strain ATCC 8585 / CBS 2359 / DSM 70799 / NBRC 1267 / NRRL Y-1140 / WM37) (Yeast).